The following is a 106-amino-acid chain: uncharacterized protein (106 aa).

2 consecutive transmembrane segments (helical) span residues 25 to 45 (VMNVVLNTLFSFVLAPYIHYI) and 62 to 82 (ICFLAKFSFLLVFLFYLNFQG).

It localises to the membrane. This is an uncharacterized protein from Saccharomyces cerevisiae (strain ATCC 204508 / S288c) (Baker's yeast).